The sequence spans 440 residues: Transposon TyH3 Gag polyprotein (440 aa).

Polar residues-rich tracts occupy residues 1-23, 48-60, and 127-152; these read MESQ…SVTS, TKAN…TPAS, and QSQF…GNTF. 3 disordered regions span residues 1–93, 126–173, and 352–440; these read MESQ…MMTQ, PQSQ…RPPP, and GSRN…PETY. Low complexity predominate over residues 153-165; sequence TDSSSADSDMTST. Positions 299-401 are RNA-binding; the sequence is NNGIHINNKV…NSKSKTARAH (103 aa). Residues 402 to 418 show a composition bias toward low complexity; that stretch reads NVSTSNNSPSTDNDSIS. A Phosphoserine modification is found at S416. The span at 419–428 shows a compositional bias: polar residues; sequence KSTTEPIQLN. The segment covering 429–440 has biased composition (basic and acidic residues); the sequence is NKHDLHLRPETY.

Homotrimer.

It localises to the cytoplasm. Capsid protein (CA) is the structural component of the virus-like particle (VLP), forming the shell that encapsulates the retrotransposons dimeric RNA genome. The particles are assembled from trimer-clustered units and there are holes in the capsid shells that allow for the diffusion of macromolecules. CA also has nucleocapsid-like chaperone activity, promoting primer tRNA(i)-Met annealing to the multipartite primer-binding site (PBS), dimerization of Ty1 RNA and initiation of reverse transcription. This Saccharomyces cerevisiae (Baker's yeast) protein is Transposon TyH3 Gag polyprotein (TY1A).